Consider the following 237-residue polypeptide: Heme oxygenase (237 aa).

His17 lines the heme b pocket.

The protein belongs to the heme oxygenase family.

It localises to the plastid. Its subcellular location is the chloroplast. The enzyme catalyses heme b + 3 reduced [NADPH--hemoprotein reductase] + 3 O2 = biliverdin IXalpha + CO + Fe(2+) + 3 oxidized [NADPH--hemoprotein reductase] + 3 H2O + H(+). Functionally, catalyzes the opening of the heme ring with the release of iron. Key enzyme in the synthesis of the chromophoric part of the photosynthetic antennae. This is Heme oxygenase (pbsA) from Guillardia theta (Cryptophyte).